The following is a 293-amino-acid chain: Ribonuclease P/MRP protein subunit RPP1 (293 aa).

The protein belongs to the eukaryotic/archaeal RNase P protein component 3 family. In terms of assembly, component of nuclear RNase P and RNase MRP complexes. RNase P consists of an RNA moiety and at least 9 protein subunits including POP1, POP3, POP4, POP5, POP6, POP7, POP8, RPP1 and RPR2. RNase MRP complex consists of an RNA moiety and at least 10 protein subunits including POP1, POP3, POP4, POP5, POP6, POP7, POP8, RMP1, RPP1 and SNM1, many of which are shared with the RNase P complex.

The protein resides in the nucleus. It catalyses the reaction Endonucleolytic cleavage of RNA, removing 5'-extranucleotides from tRNA precursor.. Functionally, component of ribonuclease P, a protein complex that generates mature tRNA molecules by cleaving their 5'-ends. Also a component of RNase MRP, which cleaves pre-rRNA sequences. This Saccharomyces cerevisiae (strain ATCC 204508 / S288c) (Baker's yeast) protein is Ribonuclease P/MRP protein subunit RPP1 (RPP1).